The chain runs to 185 residues: Threonylcarbamoyl-AMP synthase (185 aa).

A YrdC-like domain is found at 1-185 (MKNFEQVLKA…AKTSQILRQG (185 aa)). The tract at residues 163–185 (ETSGRNKPSEIRDAKTSQILRQG) is disordered. A compositionally biased stretch (basic and acidic residues) spans 164 to 177 (TSGRNKPSEIRDAK).

This sequence belongs to the SUA5 family. TsaC subfamily.

The protein localises to the cytoplasm. It carries out the reaction L-threonine + hydrogencarbonate + ATP = L-threonylcarbamoyladenylate + diphosphate + H2O. In terms of biological role, required for the formation of a threonylcarbamoyl group on adenosine at position 37 (t(6)A37) in tRNAs that read codons beginning with adenine. Catalyzes the conversion of L-threonine, HCO(3)(-)/CO(2) and ATP to give threonylcarbamoyl-AMP (TC-AMP) as the acyladenylate intermediate, with the release of diphosphate. The sequence is that of Threonylcarbamoyl-AMP synthase from Vibrio campbellii (strain ATCC BAA-1116).